The sequence spans 345 residues: 4-hydroxyproline 2-epimerase (345 aa).

Glutamine 85 serves as a coordination point for substrate. The active-site Proton acceptor is the serine 93. Substrate contacts are provided by residues 94–95 (GS) and aspartate 251. The active-site Proton donor is the cysteine 255. Residue 256–257 (GT) participates in substrate binding.

It belongs to the proline racemase family.

It carries out the reaction trans-4-hydroxy-L-proline = cis-4-hydroxy-D-proline. Its function is as follows. Catalyzes the epimerization of trans-4-hydroxy-L-proline (t4LHyp) to cis-4-hydroxy-D-proline (c4DHyp). May be involved in a degradation pathway of t4LHyp, which would allow A.tumefaciens to grow on t4LHyp as a sole carbon source. Can also catalyze the epimerization of trans-3-hydroxy-L-proline (t3LHyp) to cis-3-hydroxy-D-proline (c3DHyp) in vitro. Displays no proline racemase activity. The protein is 4-hydroxyproline 2-epimerase of Agrobacterium fabrum (strain C58 / ATCC 33970) (Agrobacterium tumefaciens (strain C58)).